The chain runs to 331 residues: Probable cytosolic iron-sulfur protein assembly protein Ciao1 (331 aa).

WD repeat units lie at residues 12-51 (GHKG…WTTK), 57-96 (GHKR…ATLE), 97-136 (GHEN…EFEC), 142-181 (AHSQ…SDWD), 188-227 (SHTS…NEAG), 246-285 (LHTR…KRDA), and 297-331 (AHEQ…KLQE).

Belongs to the WD repeat CIA1 family.

Functionally, essential component of the cytosolic iron-sulfur (Fe/S) protein assembly machinery. Required for the maturation of extramitochondrial Fe/S proteins. This is Probable cytosolic iron-sulfur protein assembly protein Ciao1 from Drosophila mojavensis (Fruit fly).